Here is a 248-residue protein sequence, read N- to C-terminus: Eukaryotic translation initiation factor 6 (248 aa).

It belongs to the eIF-6 family. Monomer. Associates with the 60S ribosomal subunit.

The protein resides in the cytoplasm. Its subcellular location is the nucleus. The protein localises to the nucleolus. In terms of biological role, binds to the 60S ribosomal subunit and prevents its association with the 40S ribosomal subunit to form the 80S initiation complex in the cytoplasm. May also be involved in ribosome biogenesis. In Trypanosoma cruzi (strain CL Brener), this protein is Eukaryotic translation initiation factor 6.